The primary structure comprises 212 residues: Uracil phosphoribosyltransferase (212 aa).

Residues R78, R103, and 130–138 (DPMLATGSS) contribute to the 5-phospho-alpha-D-ribose 1-diphosphate site. Residues I193 and 198-200 (GDA) contribute to the uracil site. A 5-phospho-alpha-D-ribose 1-diphosphate-binding site is contributed by D199.

The protein belongs to the UPRTase family. Requires Mg(2+) as cofactor.

It carries out the reaction UMP + diphosphate = 5-phospho-alpha-D-ribose 1-diphosphate + uracil. It functions in the pathway pyrimidine metabolism; UMP biosynthesis via salvage pathway; UMP from uracil: step 1/1. Allosterically activated by GTP. Catalyzes the conversion of uracil and 5-phospho-alpha-D-ribose 1-diphosphate (PRPP) to UMP and diphosphate. This chain is Uracil phosphoribosyltransferase, found in Pseudomonas fluorescens (strain Pf0-1).